A 394-amino-acid polypeptide reads, in one-letter code: Elongation factor Tu (394 aa).

Residues 10–204 (KEHANIGTIG…AVDTYIPTPE (195 aa)) form the tr-type G domain. The segment at 19–26 (GHVDHGKT) is G1. 19–26 (GHVDHGKT) contacts GTP. Thr26 provides a ligand contact to Mg(2+). A G2 region spans residues 60 to 64 (GITIN). A G3 region spans residues 81 to 84 (DCPG). Residues 81 to 85 (DCPGH) and 136 to 139 (NKVD) contribute to the GTP site. The segment at 136-139 (NKVD) is G4. Positions 174–176 (SAL) are G5.

This sequence belongs to the TRAFAC class translation factor GTPase superfamily. Classic translation factor GTPase family. EF-Tu/EF-1A subfamily. Monomer.

The protein localises to the cytoplasm. The enzyme catalyses GTP + H2O = GDP + phosphate + H(+). Functionally, GTP hydrolase that promotes the GTP-dependent binding of aminoacyl-tRNA to the A-site of ribosomes during protein biosynthesis. The chain is Elongation factor Tu from Staphylococcus aureus (strain COL).